A 312-amino-acid polypeptide reads, in one-letter code: Apolipoprotein E (312 aa).

A signal peptide spans 1–18 (MKALWALLLVPLLTGCLA). Repeat copies occupy residues 72–93 (VLMEDTMTEVKAYKKELEEQLG), 94–115 (PVAEETRARLAKEVQAAQARLG), 116–137 (ADMEDLRNRLGQYRNEVNTMLG), 138–159 (QSTEELRSRLSTHLRKMRKRLM), 160–181 (RDADDLQKRLAVYKAGAQEGAE), 182–203 (RGVSAIRERLGPLVEQGRQRTA), 204–225 (NLGAGAAQPLRDRAQALSDRIR), and 226–247 (GRLEEVGNQARDRLEEVREQME). The tract at residues 72-247 (VLMEDTMTEV…RLEEVREQME (176 aa)) is 8 X 22 AA approximate tandem repeats. Methionine sulfoxide is present on methionine 135. At serine 139 the chain carries Phosphoserine. The LDL and other lipoprotein receptors binding stretch occupies residues 150-160 (HLRKMRKRLMR). The interval 150–160 (HLRKMRKRLMR) is LDL receptor binding. Position 154-157 (154-157 (MRKR)) interacts with heparin. Positions 202–282 (TANLGAGAAQ…GWFEPLVEDM (81 aa)) are lipid-binding and lipoprotein association. 221–228 (SDRIRGRL) contributes to the heparin binding site. The homooligomerization stretch occupies residues 258-312 (QQIRLQAEIFQARIKGWFEPLVEDMQRQWANLMEKIQASVATNSIASTTVPLENQ). The specificity for association with VLDL stretch occupies residues 270–282 (RIKGWFEPLVEDM).

The protein belongs to the apolipoprotein A1/A4/E family. In terms of assembly, homotetramer. May interact with ABCA1; functionally associated with ABCA1 in the biogenesis of HDLs. May interact with APP/A4 amyloid-beta peptide; the interaction is extremely stable in vitro but its physiological significance is unclear. May interact with MAPT. May interact with MAP2. In the cerebrospinal fluid, interacts with secreted SORL1. Interacts with PMEL; this allows the loading of PMEL luminal fragment on ILVs to induce fibril nucleation. APOE exists as multiple glycosylated and sialylated glycoforms within cells and in plasma. The extent of glycosylation and sialylation are tissue and context specific. Post-translationally, glycated in plasma VLDL. In terms of processing, phosphorylated by FAM20C in the extracellular medium.

The protein localises to the secreted. Its subcellular location is the extracellular space. It is found in the extracellular matrix. It localises to the extracellular vesicle. The protein resides in the endosome. The protein localises to the multivesicular body. Its function is as follows. APOE is an apolipoprotein, a protein associating with lipid particles, that mainly functions in lipoprotein-mediated lipid transport between organs via the plasma and interstitial fluids. APOE is a core component of plasma lipoproteins and is involved in their production, conversion and clearance. Apolipoproteins are amphipathic molecules that interact both with lipids of the lipoprotein particle core and the aqueous environment of the plasma. As such, APOE associates with chylomicrons, chylomicron remnants, very low density lipoproteins (VLDL) and intermediate density lipoproteins (IDL) but shows a preferential binding to high-density lipoproteins (HDL). It also binds a wide range of cellular receptors including the LDL receptor/LDLR and the very low-density lipoprotein receptor/VLDLR that mediate the cellular uptake of the APOE-containing lipoprotein particles. Finally, APOE also has a heparin-binding activity and binds heparan-sulfate proteoglycans on the surface of cells, a property that supports the capture and the receptor-mediated uptake of APOE-containing lipoproteins by cells. The protein is Apolipoprotein E (Apoe) of Rattus norvegicus (Rat).